The chain runs to 226 residues: MTLAARLKQEFVSGWKPFEVVWLALFIIAQIWAYVQTPDSWLAMISGISGILCVVLVSKGKISNYFFGLIFAYTYFYVAWGSNFLGEMNTVLYVYLPSQFIGYFMWKANMQNSDGGESVIAKALTVKGWMTLIVVTTVGTLLFVQALQAAGGSSTGLDGLTTIITVAAQILMILRYREQWLLWIGLNILSIFLWAETPAIYLMYSAYLLNSLYGYYNWTKLVKRTN.

The Cytoplasmic portion of the chain corresponds to 1–14 (MTLAARLKQEFVSG). A helical membrane pass occupies residues 15 to 35 (WKPFEVVWLALFIIAQIWAYV). Glutamine 36 is a topological domain (periplasmic). A helical transmembrane segment spans residues 37-57 (TPDSWLAMISGISGILCVVLV). At 58 to 65 (SKGKISNY) the chain is on the cytoplasmic side. A helical membrane pass occupies residues 66-86 (FFGLIFAYTYFYVAWGSNFLG). Over 87 to 90 (EMNT) the chain is Periplasmic. The helical transmembrane segment at 91–110 (VLYVYLPSQFIGYFMWKANM) threads the bilayer. Residues 111–123 (QNSDGGESVIAKA) lie on the Cytoplasmic side of the membrane. Residues 124-144 (LTVKGWMTLIVVTTVGTLLFV) traverse the membrane as a helical segment. The Periplasmic segment spans residues 145–153 (QALQAAGGS). Residues 154–174 (STGLDGLTTIITVAAQILMIL) form a helical membrane-spanning segment. At 175–179 (RYREQ) the chain is on the cytoplasmic side. Residues 180 to 200 (WLLWIGLNILSIFLWAETPAI) form a helical membrane-spanning segment. Residues tryptophan 183 and asparagine 187 each coordinate beta-nicotinamide D-riboside. The Periplasmic segment spans residues 201–202 (YL). Residues 203–223 (MYSAYLLNSLYGYYNWTKLVK) traverse the membrane as a helical segment. At 224–226 (RTN) the chain is on the cytoplasmic side.

Belongs to the nicotinamide ribonucleoside (NR) uptake permease (TC 4.B.1) family.

The protein resides in the cell inner membrane. In terms of biological role, required for nicotinamide riboside transport across the inner membrane. The protein is Nicotinamide riboside transporter PnuC (pnuC) of Haemophilus influenzae (strain ATCC 51907 / DSM 11121 / KW20 / Rd).